The sequence spans 79 residues: Conotoxin 8 (79 aa).

The first 22 residues, 1-22 (MKLTCVLIITVLFLTASQLITA), serve as a signal peptide directing secretion. Residues 23–47 (DYSRGQRQYRAVRLGDEMRNFKGAR) constitute a propeptide that is removed on maturation. 3 cysteine pairs are disulfide-bonded: Cys-49/Cys-62, Cys-56/Cys-67, and Cys-61/Cys-77.

The protein belongs to the conotoxin O1 superfamily. In terms of tissue distribution, expressed by the venom duct.

It is found in the secreted. The protein is Conotoxin 8 of Conus vexillum (Flag cone).